A 387-amino-acid chain; its full sequence is Pepsin II-2/3 (387 aa).

The first 15 residues, 1–15 (MKWLLLLGLLALSEC), serve as a signal peptide directing secretion. Residues 16–59 (IVHKVPLVRKKSLRKNLIEKGLLQDYLKTHTPNPATKYFPKETF) constitute a propeptide, activation peptide. The 310-residue stretch at 75–384 (YFGTISIGTP…DRANNQLGLA (310 aa)) folds into the Peptidase A1 domain. The active site involves aspartate 93. The cysteines at positions 106 and 111 are disulfide-linked. Serine 129 carries the post-translational modification Phosphoserine. A disulfide bridge connects residues cysteine 267 and cysteine 271. Aspartate 276 is an active-site residue. An intrachain disulfide couples cysteine 310 to cysteine 343.

It belongs to the peptidase A1 family.

It is found in the secreted. It carries out the reaction Preferential cleavage: hydrophobic, preferably aromatic, residues in P1 and P1' positions. Cleaves 1-Phe-|-Val-2, 4-Gln-|-His-5, 13-Glu-|-Ala-14, 14-Ala-|-Leu-15, 15-Leu-|-Tyr-16, 16-Tyr-|-Leu-17, 23-Gly-|-Phe-24, 24-Phe-|-Phe-25 and 25-Phe-|-Tyr-26 bonds in the B chain of insulin.. Its function is as follows. Shows particularly broad specificity; although bonds involving phenylalanine and leucine are preferred, many others are also cleaved to some extent. This Oryctolagus cuniculus (Rabbit) protein is Pepsin II-2/3.